Here is a 429-residue protein sequence, read N- to C-terminus: Gamma-glutamyl phosphate reductase (429 aa).

This sequence belongs to the gamma-glutamyl phosphate reductase family.

It is found in the cytoplasm. The catalysed reaction is L-glutamate 5-semialdehyde + phosphate + NADP(+) = L-glutamyl 5-phosphate + NADPH + H(+). The protein operates within amino-acid biosynthesis; L-proline biosynthesis; L-glutamate 5-semialdehyde from L-glutamate: step 2/2. Catalyzes the NADPH-dependent reduction of L-glutamate 5-phosphate into L-glutamate 5-semialdehyde and phosphate. The product spontaneously undergoes cyclization to form 1-pyrroline-5-carboxylate. This Sphingopyxis alaskensis (strain DSM 13593 / LMG 18877 / RB2256) (Sphingomonas alaskensis) protein is Gamma-glutamyl phosphate reductase.